The sequence spans 54 residues: Phorbol-12-myristate-13-acetate-induced protein 1 (54 aa).

The BH3 signature appears at 29–37 (LRRFGDKLN). A required for mitochondrial location region spans residues 41–50 (KLLNLISKLF).

This sequence belongs to the PMAIP1 family. Interacts with MCL1. Interacts with BCL2A1. Interacts with BAX. Interacts with BCL2L10. Highly expressed in adult T-cell leukemia cell line.

It localises to the mitochondrion. Promotes activation of caspases and apoptosis. Promotes mitochondrial membrane changes and efflux of apoptogenic proteins from the mitochondria. Contributes to p53/TP53-dependent apoptosis after radiation exposure. Promotes proteasomal degradation of MCL1. Competes with BAK1 for binding to MCL1 and can displace BAK1 from its binding site on MCL1. Competes with BIM/BCL2L11 for binding to MCL1 and can displace BIM/BCL2L11 from its binding site on MCL1. This is Phorbol-12-myristate-13-acetate-induced protein 1 (PMAIP1) from Homo sapiens (Human).